The following is a 572-amino-acid chain: Putative inorganic phosphate transporter C8E4.01c (572 aa).

Residues 1–47 (MAFGSKILNIGSKSDEYNDDAVPLDQVEEGAQERRYYLGLTKREFKL) are Cytoplasmic-facing. Phosphoserine is present on residues Ser12 and Ser14. The helical transmembrane segment at 48-68 (MMLAGVGFFLDSYDLFIINLV) threads the bilayer. Over 69-99 (TPIFEYLYWGGIEKGPTGKGHYPSGIRGLVN) the chain is Extracellular. The helical transmembrane segment at 100 to 120 (ASANIGNIFGQLLFGFMGDFF) threads the bilayer. The Cytoplasmic segment spans residues 121–123 (GRK). Residues 124 to 144 (FVYGKEMVIVIIATVLVIAMP) form a helical membrane-spanning segment. The Extracellular portion of the chain corresponds to 145–153 (KSIHSPLSK). The helical transmembrane segment at 154–174 (MMWVFCWRWLLGVGIGGDYPM) threads the bilayer. Residues 175–193 (SAAITSERSKIKRRGTLIS) lie on the Cytoplasmic side of the membrane. The helical transmembrane segment at 194 to 214 (LIFAFQGFGTLAGAIVTIILL) threads the bilayer. Over 215–229 (GCFEHPLNREGHYHK) the chain is Extracellular. Residues 230-250 (LEGVWRLQFGLALVPAIGVLI) traverse the membrane as a helical segment. The Cytoplasmic segment spans residues 251–346 (PRLIMKESKS…TYFRQWRHFK (96 aa)). Residues 265–297 (KALNSAEGKDPKAFFNTDDEDNMKKSSSHGDSE) are disordered. Basic and acidic residues predominate over residues 286–296 (NMKKSSSHGDS). Phosphoserine occurs at positions 292 and 296. The helical transmembrane segment at 347-367 (HLLGTSVCWFLLDIAFYGVNL) threads the bilayer. Residues 368–395 (NQSVILKNIGFSTGTNEYRTLMKNAIGN) are Extracellular-facing. The chain crosses the membrane as a helical span at residues 396–416 (LIIAVAGYVPGYWFNVFLVEI). At 417–420 (LGRK) the chain is on the cytoplasmic side. A helical membrane pass occupies residues 421–441 (WIQLQGFVITGLMFAILAGRW). The Extracellular portion of the chain corresponds to 442–449 (NEISTGGR). The chain crosses the membrane as a helical span at residues 450 to 470 (FACFVIAQLFSNFGPNSTTFI). Topologically, residues 471-485 (YPAEVFPARVRGTAH) are cytoplasmic. The helical transmembrane segment at 486-506 (GVSAALGKCGAILASLLFNFL) threads the bilayer. Residues 507–508 (TG) are Extracellular-facing. The helical transmembrane segment at 509–529 (VIGYGNVMWIFCGCMWGGILF) threads the bilayer. Over 530 to 572 (TLLLPETKGRDADEIDRLELFYGKDGKVQCDSKWKSWYFNGIF) the chain is Cytoplasmic.

This sequence belongs to the major facilitator superfamily. Sugar transporter (TC 2.A.1.1) family.

The protein localises to the membrane. High-affinity transporter for external inorganic phosphate. The polypeptide is Putative inorganic phosphate transporter C8E4.01c (Schizosaccharomyces pombe (strain 972 / ATCC 24843) (Fission yeast)).